A 437-amino-acid polypeptide reads, in one-letter code: MVSYVVALPEVMSAAATDVASIGSVVATASQGVAGATTTVLAAAEDEVSAAIAALFSGHGQDYQALSAQLAVFHERFVQALTGAAKGYAAAELANASLLQSEFASGIGNGFATIHQEIQRAPTALAAGFTQVPPFAAAQAGIFTGTPSGAAGFDIASLWPVKPLLSLSALETHFAIPNNPLLALIASDIPPLSWFLGNSPPPLLNSLLGQTVQYTTYDGMSVVQITPAHPTGEYVVAIHGGAFILPPSIFHWLNYSVTAYQTGATVQVPIYPLVQEGGTAGTVVPAMAGLISTQIAQHGVSNVSVVGDSAGGNLALAAAQYMVSQGNPVPSSMVLLSPWLDVGTWQISQAWAGNLAVNDPLVSPLYGSLNGLPPTYVYSGSLDPLAQQAVVLEHTAVVQGAPFSFVLAPWQIHDWILLTPWGLLSWPQINQQLGIAA.

A PE domain is found at M1–Q100. The linker stretch occupies residues S101–S206. A lipase region spans residues L207–A437. Residues H239–G241 carry the Involved in the stabilization of the negatively charged intermediate by the formation of the oxyanion hole motif. Active-site residues include S309, D383, and H413.

In the N-terminal section; belongs to the mycobacterial PE family. PGRS subfamily. This sequence in the C-terminal section; belongs to the 'GDXG' lipolytic enzyme family. In terms of assembly, forms aggregates via its PE domain. Upon export, the PE domain is removed by proteolytic cleavage. Cleavage occurs at the cell surface and is not required for secretion. Cleaved after Gly-149 by the aspartic protease PecA. May also be cleaved before Leu-98 and after Ala-136.

It is found in the cytoplasm. The protein localises to the secreted. The protein resides in the cell wall. It localises to the cell surface. It catalyses the reaction a triacylglycerol + H2O = a diacylglycerol + a fatty acid + H(+). The enzyme catalyses 1,2,3-tri-(9Z-octadecenoyl)-glycerol + H2O = di-(9Z)-octadecenoylglycerol + (9Z)-octadecenoate + H(+). It carries out the reaction an acetyl ester + H2O = an aliphatic alcohol + acetate + H(+). The catalysed reaction is a butanoate ester + H2O = an aliphatic alcohol + butanoate + H(+). It catalyses the reaction a hexanoate ester + H2O = an aliphatic alcohol + hexanoate + H(+). The enzyme catalyses an octanoate ester + H2O = an aliphatic alcohol + octanoate + H(+). It carries out the reaction a dodecanoate ester + H2O = an aliphatic alcohol + dodecanoate + H(+). The catalysed reaction is a tetradecanoate ester + H2O = an aliphatic alcohol + tetradecanoate + H(+). It catalyses the reaction hexadecanoate ester + H2O = an aliphatic alcohol + hexadecanoate + H(+). The enzyme catalyses octadecanoate ester + H2O = an aliphatic alcohol + octadecanoate + H(+). It carries out the reaction 1-butyrylglycerol + H2O = butanoate + glycerol + H(+). The catalysed reaction is 1,2,3-tributanoylglycerol + H2O = dibutanoylglycerol + butanoate + H(+). PE domain down-regulates lipase activity. Its activity is regulated as follows. Cleavage by PecA does not affect surface localization and lipase activity. With respect to regulation, inhibited by diethyl-p-nitrophenyl phosphate (E-600) at 0.5 uM, by phenylmethanesulfonyl fluoride at 5 mM and by polyethylene glycol sorbitan monolaurate (Tween 20). Also inhibited by CaCl(2), CoCl(2), MnCl(2), ZnCl(2) and MgCl(2). Inhibited by several hydrazides compounds. Stimulated slightly by SDS at concentrations up to 2 mM, above which the activity is severely inhibited. Functionally, catalyzes the hydrolysis of both intracellular and extracellular triacylglycerol (TAG). In vitro, can also hydrolyze p-nitrophenyl (pNP) esters with various chain lengths, including pNP-acetate (C2), pNP-butyrate (C4), pNP-caproate (C6), pNP-caprylate (C8), pNP-laurate (C12), pNP-myristate (C14), pNP-palmitate (C16) and pNP-stearate (C18). Also hydrolyzes monobutyrin, tributyrin and trioctanoin. Overexpression results in increase of virulence characterized by reduced survival of infected mouse and increased burden of bacilli in the lungs. Hydrolyzes internal or host-derived TAG depending on its localization. Hydrolyzes TAG that accumulates within mycobacterial intracytosolic lipid inclusions (ILI). Probably responsible for the utilization of stored long-chain TAG during the dormancy and reactivation stages of the pathogen. In terms of biological role, hydrolyzes host-derived TAG. The chain is Triacylglycerol lipase from Mycobacterium tuberculosis (strain ATCC 25618 / H37Rv).